We begin with the raw amino-acid sequence, 365 residues long: tRNA N6-adenosine threonylcarbamoyltransferase (365 aa).

2 residues coordinate Fe cation: His119 and His123. Residues 141–145 (LVSGG), Asp174, Gly187, and Asn289 each bind substrate. Asp317 contributes to the Fe cation binding site. The tract at residues 341–365 (SARPRWPLDKTSPALIGSGKKGAKA) is disordered.

It belongs to the KAE1 / TsaD family. It depends on Fe(2+) as a cofactor.

It localises to the cytoplasm. It catalyses the reaction L-threonylcarbamoyladenylate + adenosine(37) in tRNA = N(6)-L-threonylcarbamoyladenosine(37) in tRNA + AMP + H(+). Its function is as follows. Required for the formation of a threonylcarbamoyl group on adenosine at position 37 (t(6)A37) in tRNAs that read codons beginning with adenine. Is involved in the transfer of the threonylcarbamoyl moiety of threonylcarbamoyl-AMP (TC-AMP) to the N6 group of A37, together with TsaE and TsaB. TsaD likely plays a direct catalytic role in this reaction. The sequence is that of tRNA N6-adenosine threonylcarbamoyltransferase from Ruegeria sp. (strain TM1040) (Silicibacter sp.).